A 185-amino-acid polypeptide reads, in one-letter code: Ribosome-recycling factor (185 aa).

The protein belongs to the RRF family.

The protein localises to the cytoplasm. Responsible for the release of ribosomes from messenger RNA at the termination of protein biosynthesis. May increase the efficiency of translation by recycling ribosomes from one round of translation to another. This is Ribosome-recycling factor from Oceanobacillus iheyensis (strain DSM 14371 / CIP 107618 / JCM 11309 / KCTC 3954 / HTE831).